The following is a 435-amino-acid chain: Glutamyl-tRNA reductase (435 aa).

Substrate-binding positions include 49–52 (TCNR), S118, 123–125 (EPQ), and Q129. The active-site Nucleophile is the C50. 203–208 (GAGETI) lines the NADP(+) pocket.

It belongs to the glutamyl-tRNA reductase family. As to quaternary structure, homodimer.

It catalyses the reaction (S)-4-amino-5-oxopentanoate + tRNA(Glu) + NADP(+) = L-glutamyl-tRNA(Glu) + NADPH + H(+). It participates in porphyrin-containing compound metabolism; protoporphyrin-IX biosynthesis; 5-aminolevulinate from L-glutamyl-tRNA(Glu): step 1/2. Functionally, catalyzes the NADPH-dependent reduction of glutamyl-tRNA(Glu) to glutamate 1-semialdehyde (GSA). The polypeptide is Glutamyl-tRNA reductase (Glaesserella parasuis serovar 5 (strain SH0165) (Haemophilus parasuis)).